We begin with the raw amino-acid sequence, 374 residues long: Alcohol dehydrogenase 1 (374 aa).

Ser1 carries the post-translational modification N-acetylserine. Zn(2+) contacts are provided by Cys46, His67, Cys97, Cys100, Cys103, Cys111, and Cys174. Residues 199 to 204 (GLGGVG), Asp223, Lys228, 292 to 294 (VGV), and Arg369 each bind NAD(+).

It belongs to the zinc-containing alcohol dehydrogenase family. Class-I subfamily. In terms of assembly, homodimer. Requires Zn(2+) as cofactor.

It localises to the cytoplasm. The enzyme catalyses a primary alcohol + NAD(+) = an aldehyde + NADH + H(+). It carries out the reaction a secondary alcohol + NAD(+) = a ketone + NADH + H(+). The sequence is that of Alcohol dehydrogenase 1 (ADH1) from Struthio camelus (Common ostrich).